Reading from the N-terminus, the 452-residue chain is MKAKAILLASVLLVGCQSTGNVQQHAQSLSAAGQGEAAKFTSQARWMDDGTSIAPDGDLWAFIGDELKMGIPENDRIREQKQKYLRNKSYLHDVTLRAEPYMYWIAGQVKKRNMPMELVLLPIVESAFDPHATSGANAAGIWQIIPSTGRNYGLKQTRNYDARRDVVASTTAALNMMQRLNKMFDGDWLLTVAAYNSGEGRVMKAIKTNKARGKSTDFWSLPLPQETKQYVPKMLALSDILKNSKRYGVRLPTTDESRALARVHLSSPVEMAKVADMAGISVSKLKTFNAGVKGSTLGASGPQYVMVPKKHADQLRESLASGEIAAVQSTLVADNTPLNSRVYTVRSGDTLSSIASRLGVSTKDLQQWNKLRGSKLKPGQSLTIGAGSSAQRLANNSDSITYRVRKGDSLSSIAKRHGVNIKDVMRWNSDTANLQPGDKLTLFVKNNNMPDS.

Positions 1 to 15 (MKAKAILLASVLLVG) are cleaved as a signal peptide. C16 is lipidated: N-palmitoyl cysteine. A lipid anchor (S-diacylglycerol cysteine) is attached at C16. Positions 113–198 (NMPMELVLLP…LLTVAAYNSG (86 aa)) are slt-type domain. E125 is an active-site residue. 2 consecutive LysM domains span residues 341 to 384 (RVYT…SLTI) and 400 to 448 (ITYR…KNNN).

It belongs to the transglycosylase Slt family.

Its subcellular location is the cell membrane. It carries out the reaction Exolytic cleavage of the (1-&gt;4)-beta-glycosidic linkage between N-acetylmuramic acid (MurNAc) and N-acetylglucosamine (GlcNAc) residues in peptidoglycan, from either the reducing or the non-reducing ends of the peptidoglycan chains, with concomitant formation of a 1,6-anhydrobond in the MurNAc residue.. In terms of biological role, murein-degrading enzyme. May play a role in recycling of muropeptides during cell elongation and/or cell division. The protein is Membrane-bound lytic murein transglycosylase D (mltD) of Escherichia coli O6:H1 (strain CFT073 / ATCC 700928 / UPEC).